A 342-amino-acid chain; its full sequence is Isopentenyl-diphosphate delta-isomerase (342 aa).

Residue R11–K12 participates in substrate binding. FMN is bound by residues S68, S69–T71, S99, and N127. Position 99–101 (S99–R101) interacts with substrate. Q162 provides a ligand contact to substrate. Residue E163 participates in Mg(2+) binding. Residues K194, T224, G274–K276, and A295–G296 contribute to the FMN site.

Belongs to the IPP isomerase type 2 family. Homooctamer. Dimer of tetramers. FMN is required as a cofactor. Requires NADPH as cofactor. Mg(2+) serves as cofactor.

Its subcellular location is the cytoplasm. It carries out the reaction isopentenyl diphosphate = dimethylallyl diphosphate. Its function is as follows. Involved in the biosynthesis of isoprenoids. Catalyzes the 1,3-allylic rearrangement of the homoallylic substrate isopentenyl (IPP) to its allylic isomer, dimethylallyl diphosphate (DMAPP). In Rickettsia conorii (strain ATCC VR-613 / Malish 7), this protein is Isopentenyl-diphosphate delta-isomerase.